A 546-amino-acid polypeptide reads, in one-letter code: Chaperonin GroEL 1 (546 aa).

Residues 30–33 (TLGP), lysine 51, 87–91 (DGTTT), glycine 415, and aspartate 495 contribute to the ATP site. Residues 527–546 (DAAPTAAPGGPGAGGPGFDF) are disordered. Gly residues predominate over residues 535–546 (GGPGAGGPGFDF).

It belongs to the chaperonin (HSP60) family. Forms a cylinder of 14 subunits composed of two heptameric rings stacked back-to-back. Interacts with the co-chaperonin GroES.

It localises to the cytoplasm. The enzyme catalyses ATP + H2O + a folded polypeptide = ADP + phosphate + an unfolded polypeptide.. In terms of biological role, together with its co-chaperonin GroES, plays an essential role in assisting protein folding. The GroEL-GroES system forms a nano-cage that allows encapsulation of the non-native substrate proteins and provides a physical environment optimized to promote and accelerate protein folding. This Burkholderia lata (strain ATCC 17760 / DSM 23089 / LMG 22485 / NCIMB 9086 / R18194 / 383) protein is Chaperonin GroEL 1.